Here is a 663-residue protein sequence, read N- to C-terminus: UvrABC system protein B (663 aa).

The Helicase ATP-binding domain maps to 30 to 414 (EGIKAGKRHQ…IEHTDKMVEQ (385 aa)). Position 43 to 50 (43 to 50 (GATGTGKT)) interacts with ATP. Positions 96–119 (YYDYYQPEAYVPSTDTFIEKDASI) match the Beta-hairpin motif. In terms of domain architecture, Helicase C-terminal spans 434-600 (QIDDLLSEIQ…TINKKIHDLI (167 aa)). Residues 627–662 (QKTIDNIEKEMKQAAKDLDFEKATELRDMLFELKAE) form the UVR domain.

The protein belongs to the UvrB family. As to quaternary structure, forms a heterotetramer with UvrA during the search for lesions. Interacts with UvrC in an incision complex.

It localises to the cytoplasm. In terms of biological role, the UvrABC repair system catalyzes the recognition and processing of DNA lesions. A damage recognition complex composed of 2 UvrA and 2 UvrB subunits scans DNA for abnormalities. Upon binding of the UvrA(2)B(2) complex to a putative damaged site, the DNA wraps around one UvrB monomer. DNA wrap is dependent on ATP binding by UvrB and probably causes local melting of the DNA helix, facilitating insertion of UvrB beta-hairpin between the DNA strands. Then UvrB probes one DNA strand for the presence of a lesion. If a lesion is found the UvrA subunits dissociate and the UvrB-DNA preincision complex is formed. This complex is subsequently bound by UvrC and the second UvrB is released. If no lesion is found, the DNA wraps around the other UvrB subunit that will check the other stand for damage. The sequence is that of UvrABC system protein B from Staphylococcus aureus (strain MSSA476).